Here is an 80-residue protein sequence, read N- to C-terminus: Cell division protein ZapB (80 aa).

The stretch at 3–80 (FEVFEKLEAK…ALLGKMEDVQ (78 aa)) forms a coiled coil.

This sequence belongs to the ZapB family. In terms of assembly, homodimer. The ends of the coiled-coil dimer bind to each other, forming polymers. Interacts with FtsZ.

The protein resides in the cytoplasm. In terms of biological role, non-essential, abundant cell division factor that is required for proper Z-ring formation. It is recruited early to the divisome by direct interaction with FtsZ, stimulating Z-ring assembly and thereby promoting cell division earlier in the cell cycle. Its recruitment to the Z-ring requires functional FtsA or ZipA. This is Cell division protein ZapB from Photorhabdus laumondii subsp. laumondii (strain DSM 15139 / CIP 105565 / TT01) (Photorhabdus luminescens subsp. laumondii).